Consider the following 459-residue polypeptide: Cysteine--tRNA ligase (459 aa).

Cysteine 31 contacts Zn(2+). A 'HIGH' region motif is present at residues 33–43; that stretch reads PTVYDNPHIGN. 3 residues coordinate Zn(2+): cysteine 216, histidine 241, and glutamate 245. The 'KMSKS' region motif lies at 274–278; the sequence is KMSKS. Lysine 277 is a binding site for ATP.

It belongs to the class-I aminoacyl-tRNA synthetase family. As to quaternary structure, monomer. Requires Zn(2+) as cofactor.

The protein localises to the cytoplasm. It catalyses the reaction tRNA(Cys) + L-cysteine + ATP = L-cysteinyl-tRNA(Cys) + AMP + diphosphate. The chain is Cysteine--tRNA ligase from Rickettsia canadensis (strain McKiel).